Here is a 164-residue protein sequence, read N- to C-terminus: CB1 cannabinoid receptor-interacting protein 1 (164 aa).

Belongs to the CNRIP family. As to quaternary structure, interacts with the cannabinoid receptor CNR1 (via C-terminus). Does not interact with cannabinoid receptor CNR2. Highly expressed in brain. Also detected in heart, lung, intestine, kidney, testis, spleen, liver and muscle (at protein level).

Suppresses cannabinoid receptor CNR1-mediated tonic inhibition of voltage-gated calcium channels. The sequence is that of CB1 cannabinoid receptor-interacting protein 1 (Cnrip1) from Mus musculus (Mouse).